Consider the following 990-residue polypeptide: Leucine--tRNA ligase (990 aa).

The 'HIGH' region motif lies at 74–85 (PYPSGKGLHVGH). Residues 573-602 (LPINLPDVPDYSPKTFDPEDAESDPEAPLS) form a disordered region. The 'KMSKS' region motif lies at 763–767 (KMGKS). Position 766 (K766) interacts with ATP.

This sequence belongs to the class-I aminoacyl-tRNA synthetase family.

Its subcellular location is the cytoplasm. The catalysed reaction is tRNA(Leu) + L-leucine + ATP = L-leucyl-tRNA(Leu) + AMP + diphosphate. The polypeptide is Leucine--tRNA ligase (Bifidobacterium adolescentis (strain ATCC 15703 / DSM 20083 / NCTC 11814 / E194a)).